The chain runs to 298 residues: TLR adapter interacting with SLC15A4 on the lysosome (298 aa).

Residues 287–291 (SLHIS) carry the pLxIS motif motif. S291 bears the Phosphoserine mark.

Interacts (via pLxIS motif) with IRF5; leading to IRF5 activation. Interacts with SLC15A4; leading to its recruitment to endolysosome. The phosphorylated pLxIS motif constitutes an IRF5-binding motif, leading to recruitment of the transcription factor IRF5 to induce type-I interferons and other cytokines.

It is found in the lysosome membrane. It localises to the endosome membrane. Its subcellular location is the nucleus. The protein localises to the cytoplasm. Its function is as follows. Innate immune adapter that mediates the recruitment and activation of IRF5 downstream of endolysosomal toll-like receptors TLR7, TLR8 and TLR9. Following recruitment to endolysosome by SLC15A4 downstream of TLR7, TLR8 and TLR9, specifically recruits IRF5 transcription factor via its pLxIS motif, leading to IRF5 activation and subsequent expression of type I interferons. Plays a role in the regulation of endolysosomal pH in immune cells such as B-cells, dendritic cells and monocytes. The polypeptide is TLR adapter interacting with SLC15A4 on the lysosome (Mus musculus (Mouse)).